The chain runs to 57 residues: Large ribosomal subunit protein bL32 (57 aa).

Over residues 1–19 (MATPKRRMSRANTRSRRAQ) the composition is skewed to basic residues. The disordered stretch occupies residues 1-20 (MATPKRRMSRANTRSRRAQW).

Belongs to the bacterial ribosomal protein bL32 family.

The protein is Large ribosomal subunit protein bL32 of Mycobacterium leprae (strain Br4923).